Here is a 156-residue protein sequence, read N- to C-terminus: 6,7-dimethyl-8-ribityllumazine synthase (156 aa).

Residues phenylalanine 25, 59–61 (AWE), and 83–85 (AVI) each bind 5-amino-6-(D-ribitylamino)uracil. 88-89 (ST) lines the (2S)-2-hydroxy-3-oxobutyl phosphate pocket. Residue histidine 91 is the Proton donor of the active site. Asparagine 116 serves as a coordination point for 5-amino-6-(D-ribitylamino)uracil. Arginine 130 is a (2S)-2-hydroxy-3-oxobutyl phosphate binding site.

Belongs to the DMRL synthase family. In terms of assembly, forms an icosahedral capsid composed of 60 subunits, arranged as a dodecamer of pentamers.

The catalysed reaction is (2S)-2-hydroxy-3-oxobutyl phosphate + 5-amino-6-(D-ribitylamino)uracil = 6,7-dimethyl-8-(1-D-ribityl)lumazine + phosphate + 2 H2O + H(+). It functions in the pathway cofactor biosynthesis; riboflavin biosynthesis; riboflavin from 2-hydroxy-3-oxobutyl phosphate and 5-amino-6-(D-ribitylamino)uracil: step 1/2. Catalyzes the formation of 6,7-dimethyl-8-ribityllumazine by condensation of 5-amino-6-(D-ribitylamino)uracil with 3,4-dihydroxy-2-butanone 4-phosphate. This is the penultimate step in the biosynthesis of riboflavin. This is 6,7-dimethyl-8-ribityllumazine synthase from Acinetobacter baumannii (strain AB0057).